We begin with the raw amino-acid sequence, 57 residues long: Large ribosomal subunit protein bL32 (57 aa).

The segment covering 1-16 (MAVQKSRKTRSKRGMR) has biased composition (basic residues). Residues 1-45 (MAVQKSRKTRSKRGMRRSHDALTAPAQLSVDATSGETHRRHHMTA) are disordered.

This sequence belongs to the bacterial ribosomal protein bL32 family.

The protein is Large ribosomal subunit protein bL32 of Psychromonas ingrahamii (strain DSM 17664 / CCUG 51855 / 37).